Consider the following 60-residue polypeptide: Mastoparan-D (60 aa).

The N-terminal stretch at 1 to 27 (MKNTILILFTAFIALLGFFGMSAEALA) is a signal peptide. AXPX repeat units follow at residues 27–30 (ADPI), 31–34 (ADPV), 35–38 (AGPN), and 41–44 (ADPE). Residues 28 to 45 (DPIADPVAGPNPEADPEA) constitute a propeptide that is removed on maturation. A Leucine amide modification is found at L59.

This sequence belongs to the MCD family. Mastoparan subfamily. In terms of tissue distribution, expressed by the venom gland.

It localises to the secreted. The protein localises to the target cell membrane. In terms of biological role, antimicrobial and mast cell degranulating peptide. Has broad spectrum antibacterial activity against both Gram-positive and Gram-negative bacteria (S.aureus MIC=24-32 ug/ml, S.xylosus MIC=2 ug/ml, S.alactolyticus MIC=16 ug/ml, C.koseri MIC=4 ug/ml, E.coli MIC=8 ug/ml, K.pneumoniae MIC=32 ug/ml, P.aerugiosa MIC=128 ug/ml, S.choleraesuis MIC=16 ug/ml, S.typhimurium MIC=32 ug/ml, V.parahamelytics MIC=32 ug/ml). Affects membrane permeability of E.coli. Shows hemolytic activities on sheep, chicken and human erythrocytes. Its mast cell degranulation activity may be related to the activation of G-protein coupled receptors in mast cells as well as interaction with other proteins located in cell endosomal membranes in the mast cells. The sequence is that of Mastoparan-D from Vespa ducalis (Black-tailed hornet).